The primary structure comprises 516 residues: Leucine-rich repeat transmembrane neuronal protein 2 (516 aa).

An N-terminal signal peptide occupies residues 1–33 (MGLHFKWPLGAPMLAAIYAMSMVLKMLPALGMA). Positions 34–61 (CPPKCRCEKLLFYCDSQGFHSVPNATDK) constitute an LRRNT domain. At 34–422 (CPPKCRCEKL…EPDNAIFTQR (389 aa)) the chain is on the extracellular side. N-linked (GlcNAc...) asparagine glycosylation is present at asparagine 57. LRR repeat units follow at residues 63 to 83 (SLGL…QFAS), 86 to 107 (QLTW…AFQG), 110 to 131 (KLKE…TFTQ), 134 to 155 (NLQN…LFYG), 158 to 179 (KLQT…LFWD), 182 to 203 (SLEF…GFAG), 206 to 227 (KLRE…HFLR), 230 to 251 (SLHT…MEWT), 254 to 275 (TLEK…VFET), and 278 to 299 (NLKI…ILNS). N-linked (GlcNAc...) asparagine glycosylation occurs at asparagine 126. N-linked (GlcNAc...) asparagine glycosylation occurs at asparagine 243. One can recognise an LRRCT domain in the interval 311–362 (NLWECSARICALASWLGSFQGRWEHSILCHSPDHTQGEDILDAVHGFQLCWN). Asparagine 362 carries an N-linked (GlcNAc...) asparagine glycan. Residues 423 to 443 (VITGTMALLFSFFFIIFIVFI) traverse the membrane as a helical segment. The Cytoplasmic segment spans residues 444-516 (SRKCCPPTLR…QQLPYKECEV (73 aa)). Residues 513-516 (ECEV) carry the Involved in DLG4-binding motif.

Belongs to the LRRTM family. In terms of assembly, interacts with DLG4. Interacts with neurexin NRXN1; interaction is mediated by heparan sulfate glycan modification on neurexin. In terms of tissue distribution, expressed in neuronal tissues.

It localises to the cell membrane. Its subcellular location is the postsynaptic cell membrane. Involved in the development and maintenance of excitatory synapses in the vertebrate nervous system. Regulates surface expression of AMPA receptors and instructs the development of functional glutamate release sites. Acts as a ligand for the presynaptic receptors NRXN1-A and NRXN1-B. In Homo sapiens (Human), this protein is Leucine-rich repeat transmembrane neuronal protein 2 (LRRTM2).